The following is a 212-amino-acid chain: Thiamine-phosphate synthase (212 aa).

Residues 35-39 (QLRDK) and Asn-67 each bind 4-amino-2-methyl-5-(diphosphooxymethyl)pyrimidine. The Mg(2+) site is built by Asp-68 and Asp-87. Ser-106 serves as a coordination point for 4-amino-2-methyl-5-(diphosphooxymethyl)pyrimidine. 132–134 (TGS) provides a ligand contact to 2-[(2R,5Z)-2-carboxy-4-methylthiazol-5(2H)-ylidene]ethyl phosphate. Lys-135 lines the 4-amino-2-methyl-5-(diphosphooxymethyl)pyrimidine pocket. Residues Gly-163 and 183 to 184 (IS) each bind 2-[(2R,5Z)-2-carboxy-4-methylthiazol-5(2H)-ylidene]ethyl phosphate.

Belongs to the thiamine-phosphate synthase family. Mg(2+) serves as cofactor.

It carries out the reaction 2-[(2R,5Z)-2-carboxy-4-methylthiazol-5(2H)-ylidene]ethyl phosphate + 4-amino-2-methyl-5-(diphosphooxymethyl)pyrimidine + 2 H(+) = thiamine phosphate + CO2 + diphosphate. It catalyses the reaction 2-(2-carboxy-4-methylthiazol-5-yl)ethyl phosphate + 4-amino-2-methyl-5-(diphosphooxymethyl)pyrimidine + 2 H(+) = thiamine phosphate + CO2 + diphosphate. The catalysed reaction is 4-methyl-5-(2-phosphooxyethyl)-thiazole + 4-amino-2-methyl-5-(diphosphooxymethyl)pyrimidine + H(+) = thiamine phosphate + diphosphate. It participates in cofactor biosynthesis; thiamine diphosphate biosynthesis; thiamine phosphate from 4-amino-2-methyl-5-diphosphomethylpyrimidine and 4-methyl-5-(2-phosphoethyl)-thiazole: step 1/1. Condenses 4-methyl-5-(beta-hydroxyethyl)thiazole monophosphate (THZ-P) and 2-methyl-4-amino-5-hydroxymethyl pyrimidine pyrophosphate (HMP-PP) to form thiamine monophosphate (TMP). The sequence is that of Thiamine-phosphate synthase from Methanocella arvoryzae (strain DSM 22066 / NBRC 105507 / MRE50).